Here is a 340-residue protein sequence, read N- to C-terminus: MKKQKIAVLGPGSWGTALAQVLNDNGHEVRIWGNIPEQIDEINEKHTNTRYFKDVILDENIKAYKELSEALDSVNAILFVVPTKVTRLVAKQVAELLDHKVVVMHASKGLEPGTHERLSTILEEEIPSEMRSEIVVVSGPSHAEETIVRDITLITAASKDLETARYVQGIFSNSYFRLYTNSDVIGVETAGALKNIIAVGAGALHGMGYGDNAKAAVITRGLAEITRLGVKLGADPLTYSGLSGVGDLIVTGTSIHSRNWRAGDALGRGEKLEDIERNMGMVIEGISTTKVAYEIAQELGVYMPITTAIYKSIYEGADIKESILNMMSNELRSENEWDKK.

Residues S13, W14, and K108 each contribute to the NADPH site. Sn-glycerol 3-phosphate-binding residues include K108, G139, and S141. A143 provides a ligand contact to NADPH. Residues K194, D247, S257, R258, and N259 each contribute to the sn-glycerol 3-phosphate site. K194 (proton acceptor) is an active-site residue. R258 contributes to the NADPH binding site. NADPH-binding residues include V282 and E284.

Belongs to the NAD-dependent glycerol-3-phosphate dehydrogenase family.

Its subcellular location is the cytoplasm. It carries out the reaction sn-glycerol 3-phosphate + NAD(+) = dihydroxyacetone phosphate + NADH + H(+). It catalyses the reaction sn-glycerol 3-phosphate + NADP(+) = dihydroxyacetone phosphate + NADPH + H(+). It participates in membrane lipid metabolism; glycerophospholipid metabolism. Catalyzes the reduction of the glycolytic intermediate dihydroxyacetone phosphate (DHAP) to sn-glycerol 3-phosphate (G3P), the key precursor for phospholipid synthesis. The protein is Glycerol-3-phosphate dehydrogenase [NAD(P)+] of Streptococcus thermophilus (strain CNRZ 1066).